Consider the following 889-residue polypeptide: Cytoplasmic aconitate hydratase (889 aa).

Residues Q86 and 205–207 each bind substrate; that span reads DSH. Positions 437, 503, and 506 each coordinate [4Fe-4S] cluster. Residues R536, R541, R699, and 779–780 each bind substrate; that span reads SR.

This sequence belongs to the aconitase/IPM isomerase family. Interacts (when associated with the 4Fe-4S) with FBXL5. Interacts with frataxin(81-210). Requires [4Fe-4S] cluster as cofactor.

The protein resides in the cytoplasm. Its subcellular location is the cytosol. The enzyme catalyses citrate = D-threo-isocitrate. In terms of biological role, bifunctional iron sensor that switches between 2 activities depending on iron availability. Iron deprivation, promotes its mRNA binding activity through which it regulates the expression of genes involved in iron uptake, sequestration and utilization. Binds to iron-responsive elements (IRES) in the untranslated region of target mRNAs preventing for instance the translation of ferritin and aminolevulinic acid synthase and stabilizing the transferrin receptor mRNA. Conversely, when cellular iron levels are high, binds a 4Fe-4S cluster which precludes RNA binding activity and promotes the aconitase activity, the isomerization of citrate to isocitrate via cis-aconitate. The polypeptide is Cytoplasmic aconitate hydratase (Aco1) (Rattus norvegicus (Rat)).